The following is a 361-amino-acid chain: Fructose-1,6-bisphosphatase class 1 2 (361 aa).

Positions 110, 134, 136, and 137 each coordinate Mg(2+). Substrate-binding positions include 137-140 (DGSS), N231, Y264, and K294. E300 lines the Mg(2+) pocket.

This sequence belongs to the FBPase class 1 family. In terms of assembly, homotetramer. Mg(2+) serves as cofactor.

The protein resides in the cytoplasm. The enzyme catalyses beta-D-fructose 1,6-bisphosphate + H2O = beta-D-fructose 6-phosphate + phosphate. The protein operates within carbohydrate biosynthesis; gluconeogenesis. This Salinibacter ruber (strain DSM 13855 / M31) protein is Fructose-1,6-bisphosphatase class 1 2.